We begin with the raw amino-acid sequence, 220 residues long: MKSVIYHALSQKEANDSDVQPSGAQRAEAFVRAFLKRSTPRMSPQAREDQLQRKAVVLEYFTRHKRKEKKKKAKGLSARQRRELRLFDIKPEQQRYSLFLPLHELWKQYIRDLCSGLKPDTQPQMIQAKLLKADLHGAIISVTKSKCPSYVGITGILLQETKHIFKIITKEDRLKVIPKLNCVFTVETDGFISYIYGSKFQLRSSERSAKKFKAKGTIDL.

Phosphoserine is present on Ser10.

It belongs to the eukaryotic/archaeal RNase P protein component 1 family. Component of nuclear RNase P and RNase MRP ribonucleoproteins. RNase P consists of a catalytic RNA moiety and 10 different protein chains; POP1, POP4, POP5, POP7, RPP14, RPP21, RPP25, RPP30, RPP38 and RPP40. Within the RNase P complex, POP1, POP7 and RPP25 form the 'finger' subcomplex, POP5, RPP14, RPP40 and homodimeric RPP30 form the 'palm' subcomplex, and RPP21, POP4 and RPP38 form the 'wrist' subcomplex. All subunits of the RNase P complex interact with the catalytic RNA. Several subunits of RNase P are also part of the RNase MRP complex. RNase MRP consists of a catalytic RNA moiety and about 8 protein subunits; POP1, POP7, RPP25, RPP30, RPP38, RPP40 and possibly also POP4 and POP5.

The protein resides in the nucleus. Its subcellular location is the nucleolus. Its function is as follows. Component of ribonuclease P, a ribonucleoprotein complex that generates mature tRNA molecules by cleaving their 5'-ends. In Homo sapiens (Human), this protein is Ribonuclease P protein subunit p29 (POP4).